Consider the following 634-residue polypeptide: Sodium-dependent multivitamin transporter (634 aa).

12 helical membrane passes run 23–43, 65–85, 100–120, 142–162, 175–195, 207–227, 255–275, 295–315, 350–370, 403–423, 427–447, and 455–475; these read FSVVDYVVFGLLLVLSLVIGL, MGCLPVALSLLATFQSAVAIL, FLGCSYFLGLLIPAHIFIPVF, ICGTVTFIFQMVIYMGVALYA, LWLSVLALGIVCNIYTALGGL, LVMFLGQLVVIIVGAARVGGL, FWTLAFGGVFMMLSLYGVNQA, AVFPCQQVALCMSCLIGLVMF, LPGLFVACLFSGSLSTISSAF, FAYGLVCLGMAYISSHLGSVL, LSIFGMVGGPLLGLFCLGLFF, and AIVGLLTGLTMAFWIGIGSIV. N-linked (GlcNAc...) asparagine glycosylation is found at asparagine 488 and asparagine 497. The chain crosses the membrane as a helical span at residues 526-546; it reads LWYSAHNSTTVIVVGLIVSLL.

It belongs to the sodium:solute symporter (SSF) (TC 2.A.21) family. Interacts with PDZD11. As to expression, expressed in the intestinal mucosa, liver and kidney (at protein level). Expressed in the colon.

It is found in the cell membrane. Its subcellular location is the apical cell membrane. The enzyme catalyses biotin(out) + 2 Na(+)(out) = biotin(in) + 2 Na(+)(in). The catalysed reaction is (R)-pantothenate(out) + 2 Na(+)(out) = (R)-pantothenate(in) + 2 Na(+)(in). It carries out the reaction (R)-lipoate(out) + 2 Na(+)(out) = (R)-lipoate(in) + 2 Na(+)(in). It catalyses the reaction iodide(out) + 2 Na(+)(out) = iodide(in) + 2 Na(+)(in). Its function is as follows. Sodium-dependent multivitamin transporter that mediates the electrogenic transport of pantothenate, biotin, lipoate and iodide. Functions as a Na(+)-coupled substrate symporter where the stoichiometry of Na(+):substrate is 2:1, creating an electrochemical Na(+) gradient used as driving force for substrate uptake. Required for biotin and pantothenate uptake in the intestine across the brush border membrane. Plays a role in the maintenance of intestinal mucosa integrity, by providing the gut mucosa with biotin. Contributes to the luminal uptake of biotin and pantothenate into the brain across the blood-brain barrier. The chain is Sodium-dependent multivitamin transporter from Mus musculus (Mouse).